Consider the following 181-residue polypeptide: Cyclic AMP-dependent transcription factor ATF-3 (181 aa).

Residue Lys-78 forms a Glycyl lysine isopeptide (Lys-Gly) (interchain with G-Cter in SUMO2) linkage. Residues 86 to 149 (DERKKRRRER…QHLIYMLNLH (64 aa)) form the bZIP domain. Residues 88–110 (RKKRRRERNKIAAAKCRNKKKEK) form a basic motif region. A leucine-zipper region spans residues 114-142 (LQKESEKLESVNAELKAQIEELKNEKQHL). Thr-162 bears the Phosphothreonine mark. Lys-175 participates in a covalent cross-link: Glycyl lysine isopeptide (Lys-Gly) (interchain with G-Cter in SUMO2).

Belongs to the bZIP family. ATF subfamily. Binds DNA as a homodimer or a heterodimer. Interacts with KAT5; promoting KAT5 autoacetylation and KAT5 deubiquitination by USP7.

It is found in the nucleus. Its function is as follows. This protein binds the cAMP response element (CRE) (consensus: 5'-GTGACGT[AC][AG]-3'), a sequence present in many viral and cellular promoters. Represses transcription from promoters with ATF sites. It may repress transcription by stabilizing the binding of inhibitory cofactors at the promoter. Functionally, activates transcription presumably by sequestering inhibitory cofactors away from the promoters. Stress-induced isoform, counteracts the transcriptional repression of isoform 1. This Homo sapiens (Human) protein is Cyclic AMP-dependent transcription factor ATF-3.